Here is a 175-residue protein sequence, read N- to C-terminus: 3-hydroxyanthranilate 3,4-dioxygenase (175 aa).

Position 45 (Arg45) interacts with O2. Residues His49, Glu55, and His93 each contribute to the Fe cation site. Residue Glu55 participates in substrate binding. Substrate-binding residues include Arg97 and Glu107. The a divalent metal cation site is built by Cys122, Cys125, Cys159, and Cys162.

Belongs to the 3-HAO family. It depends on Fe(2+) as a cofactor.

The protein localises to the cytoplasm. It catalyses the reaction 3-hydroxyanthranilate + O2 = (2Z,4Z)-2-amino-3-carboxymuconate 6-semialdehyde. The protein operates within cofactor biosynthesis; NAD(+) biosynthesis; quinolinate from L-kynurenine: step 3/3. Functionally, catalyzes the oxidative ring opening of 3-hydroxyanthranilate to 2-amino-3-carboxymuconate semialdehyde, which spontaneously cyclizes to quinolinate. The protein is 3-hydroxyanthranilate 3,4-dioxygenase of Lodderomyces elongisporus (strain ATCC 11503 / CBS 2605 / JCM 1781 / NBRC 1676 / NRRL YB-4239) (Yeast).